A 480-amino-acid chain; its full sequence is Protein DETOXIFICATION 15 (480 aa).

12 consecutive transmembrane segments (helical) span residues 36 to 56 (GPLI…VMFV), 69 to 89 (IATS…ASAM), 118 to 138 (LLSV…VFFG), 143 to 163 (IAHL…AYGL), 180 to 200 (VVIC…VLVL), 208 to 228 (GAAV…SCYV), 255 to 275 (LVIP…ELLV), 294 to 314 (VWMI…NELG), 326 to 346 (RVVL…LILI), 360 to 380 (VVSH…LDSF), 396 to 416 (IGAF…GLLL), and 428 to 448 (WLGI…ITFF).

It belongs to the multi antimicrobial extrusion (MATE) (TC 2.A.66.1) family.

The protein localises to the membrane. This chain is Protein DETOXIFICATION 15, found in Arabidopsis thaliana (Mouse-ear cress).